Reading from the N-terminus, the 366-residue chain is 3-isopropylmalate dehydrogenase (366 aa).

77 to 90 (GPKWDDNPPHLRPE) serves as a coordination point for NAD(+). 4 residues coordinate substrate: arginine 97, arginine 107, arginine 135, and aspartate 223. Residues aspartate 223, aspartate 246, and aspartate 250 each coordinate Mg(2+). Residue 280–292 (GSAPDIAGMNKAN) participates in NAD(+) binding.

The protein belongs to the isocitrate and isopropylmalate dehydrogenases family. LeuB type 1 subfamily. Homodimer. Requires Mg(2+) as cofactor. Mn(2+) is required as a cofactor.

It localises to the cytoplasm. The catalysed reaction is (2R,3S)-3-isopropylmalate + NAD(+) = 4-methyl-2-oxopentanoate + CO2 + NADH. The protein operates within amino-acid biosynthesis; L-leucine biosynthesis; L-leucine from 3-methyl-2-oxobutanoate: step 3/4. In terms of biological role, catalyzes the oxidation of 3-carboxy-2-hydroxy-4-methylpentanoate (3-isopropylmalate) to 3-carboxy-4-methyl-2-oxopentanoate. The product decarboxylates to 4-methyl-2 oxopentanoate. The protein is 3-isopropylmalate dehydrogenase (leuB) of Bacillus caldotenax.